The primary structure comprises 145 residues: Basic phospholipase A2 S2-22 (145 aa).

Residues Met-1–Ala-19 form the signal peptide. Residues Ser-20–Leu-27 constitute a propeptide that is removed on maturation. Intrachain disulfides connect Cys-38/Cys-99, Cys-54/Cys-144, Cys-56/Cys-72, Cys-71/Cys-127, Cys-78/Cys-120, Cys-88/Cys-113, and Cys-106/Cys-118. Ca(2+) is bound by residues Tyr-55, Gly-57, and Gly-59. Residue His-75 is part of the active site. Residue Asp-76 coordinates Ca(2+). Residue Asp-121 is part of the active site.

It belongs to the phospholipase A2 family. Group I subfamily. D49 sub-subfamily. Requires Ca(2+) as cofactor. Expressed by the venom gland.

It localises to the secreted. It catalyses the reaction a 1,2-diacyl-sn-glycero-3-phosphocholine + H2O = a 1-acyl-sn-glycero-3-phosphocholine + a fatty acid + H(+). Its function is as follows. Snake venom phospholipase A2 (PLA2) that inhibits collagen-induced platelet aggregation. PLA2 catalyzes the calcium-dependent hydrolysis of the 2-acyl groups in 3-sn-phosphoglycerides. In Austrelaps superbus (Lowland copperhead snake), this protein is Basic phospholipase A2 S2-22.